The sequence spans 270 residues: Basigin (270 aa).

The N-terminal stretch at 1 to 21 (MAAVLFALLALALLRAGGASA) is a signal peptide. The region spanning 22 to 103 (AAGTVTTSVQ…TGEATLTVDG (82 aa)) is the Ig-like C2-type domain. At 22-207 (AAGTVTTSVQ…VTLRVRSRLA (186 aa)) the chain is on the extracellular side. 2 disulfides stabilise this stretch: Cys-41–Cys-87 and Cys-126–Cys-185. 4 N-linked (GlcNAc...) asparagine glycosylation sites follow: Asn-44, Asn-75, Asn-152, and Asn-186. Positions 105 to 203 (PRIKAVKKSE…DAAVVTLRVR (99 aa)) constitute an Ig-like V-type domain. The chain crosses the membrane as a helical span at residues 208 to 228 (ALWPFLGIVAEVLVLVTVIFI). The Cytoplasmic portion of the chain corresponds to 229-270 (YEKRRKPDEVLDDEDAGAAPLKSSGHHVNDDKGKNVRQRNAS). The disordered stretch occupies residues 239 to 270 (LDDEDAGAAPLKSSGHHVNDDKGKNVRQRNAS). Ser-252 carries the phosphoserine modification.

Homooligomer. Interacts with VEGFA, KDR/VEGFR2, PPIA/CYPA, SLC1A3, SLC16A12, SLC16A11, ATP1B2, MAG, L1CAM and AJAP1. Interacts with PPIL2; regulates BSG transport to the cell membrane. Interacts with XKR8; promoting its localization at the cell membrane. Interacts with SLC16A3; interaction mediates SLC16A3 targeting to the plasma membrane. Interacts with SLC16A1; interaction mediates SLC16A1 targeting to the plasma membrane. Interacts with SLC16A6; this interaction mediates targeting to the plasma membrane.

The protein resides in the cell membrane. Its subcellular location is the endoplasmic reticulum membrane. The protein localises to the basolateral cell membrane. Signaling receptor for cyclophilins, essential for PPIA/CYPA and PPIB/CYPB-dependent signaling related to chemotaxis and adhesion of immune cells. Plays an important role in targeting the monocarboxylate transporters SLC16A1/GLUT1, SLC16A3, SLC16A8, SLC16A11 and SLC16A12 to the plasma membrane. Acts as a coreceptor for vascular endothelial growth factor receptor 2 (KDR/VEGFR2) in endothelial cells enhancing its VEGFA-mediated activation and downstream signaling. Promotes angiogenesis through EPAS1/HIF2A-mediated up-regulation of VEGFA and KDR/VEGFR2 in endothelial cells. This chain is Basigin (BSG), found in Oryctolagus cuniculus (Rabbit).